A 264-amino-acid chain; its full sequence is uncharacterized protein (264 aa).

4 consecutive transmembrane segments (helical) span residues 43–63, 68–88, 96–116, and 150–170; these read VVAAACTLPADSLFAVMLYLI, FLPSTLFIVNFSLVLLALLGI, ILPALVWKCVLLLFLLFLGCI, and LAAKYPMLPFIAVACTIVLAV. The interval 216 to 247 is disordered; that stretch reads SYEDALKNSSQQPSTSSSSSSPPSRPPHSVYT. A compositionally biased stretch (low complexity) spans 224–237; the sequence is SSQQPSTSSSSSSP.

The protein localises to the membrane. This is an uncharacterized protein from Caenorhabditis elegans.